The following is a 206-amino-acid chain: 3-demethoxyubiquinol 3-hydroxylase (206 aa).

Residues E55, E85, H88, E137, E169, and H172 each contribute to the Fe cation site.

It belongs to the COQ7 family. Requires Fe cation as cofactor.

The protein resides in the cell membrane. The catalysed reaction is a 5-methoxy-2-methyl-3-(all-trans-polyprenyl)benzene-1,4-diol + AH2 + O2 = a 3-demethylubiquinol + A + H2O. Its pathway is cofactor biosynthesis; ubiquinone biosynthesis. In terms of biological role, catalyzes the hydroxylation of 2-nonaprenyl-3-methyl-6-methoxy-1,4-benzoquinol during ubiquinone biosynthesis. This chain is 3-demethoxyubiquinol 3-hydroxylase, found in Aromatoleum aromaticum (strain DSM 19018 / LMG 30748 / EbN1) (Azoarcus sp. (strain EbN1)).